Consider the following 155-residue polypeptide: 6,7-dimethyl-8-ribityllumazine synthase (155 aa).

5-amino-6-(D-ribitylamino)uracil contacts are provided by residues Phe23, 57-59 (AYE), and 81-83 (AVI). 86–87 (AT) is a binding site for (2S)-2-hydroxy-3-oxobutyl phosphate. Catalysis depends on His89, which acts as the Proton donor. Phe114 serves as a coordination point for 5-amino-6-(D-ribitylamino)uracil. Arg128 contributes to the (2S)-2-hydroxy-3-oxobutyl phosphate binding site.

The protein belongs to the DMRL synthase family.

It catalyses the reaction (2S)-2-hydroxy-3-oxobutyl phosphate + 5-amino-6-(D-ribitylamino)uracil = 6,7-dimethyl-8-(1-D-ribityl)lumazine + phosphate + 2 H2O + H(+). It functions in the pathway cofactor biosynthesis; riboflavin biosynthesis; riboflavin from 2-hydroxy-3-oxobutyl phosphate and 5-amino-6-(D-ribitylamino)uracil: step 1/2. In terms of biological role, catalyzes the formation of 6,7-dimethyl-8-ribityllumazine by condensation of 5-amino-6-(D-ribitylamino)uracil with 3,4-dihydroxy-2-butanone 4-phosphate. This is the penultimate step in the biosynthesis of riboflavin. This Desulfotalea psychrophila (strain LSv54 / DSM 12343) protein is 6,7-dimethyl-8-ribityllumazine synthase.